Reading from the N-terminus, the 152-residue chain is Clitocypin-4/-3 (152 aa).

Belongs to the protease inhibitor I48 family. In terms of assembly, homodimer.

Binds and inhibits cysteine proteinases. Inhibits most strongly papain and cathepsin L, more weakly bromelain and cathepsin B while it is completely ineffective against cathepsin H. This chain is Clitocypin-4/-3 (clt4), found in Clitocybe nebularis (Clouded agaric).